We begin with the raw amino-acid sequence, 50 residues long: Large ribosomal subunit protein bL33 (50 aa).

It belongs to the bacterial ribosomal protein bL33 family.

This Solibacter usitatus (strain Ellin6076) protein is Large ribosomal subunit protein bL33.